Reading from the N-terminus, the 943-residue chain is Isoleucine--tRNA ligase (943 aa).

The short motif at 58-68 (PYANGTIHIGH) is the 'HIGH' region element. Glutamate 567 is an L-isoleucyl-5'-AMP binding site. Positions 608–612 (KMSKS) match the 'KMSKS' region motif. Lysine 611 lines the ATP pocket. Zn(2+) is bound by residues cysteine 906, cysteine 909, cysteine 926, and cysteine 929.

It belongs to the class-I aminoacyl-tRNA synthetase family. IleS type 1 subfamily. Monomer. The cofactor is Zn(2+).

The protein localises to the cytoplasm. It carries out the reaction tRNA(Ile) + L-isoleucine + ATP = L-isoleucyl-tRNA(Ile) + AMP + diphosphate. Functionally, catalyzes the attachment of isoleucine to tRNA(Ile). As IleRS can inadvertently accommodate and process structurally similar amino acids such as valine, to avoid such errors it has two additional distinct tRNA(Ile)-dependent editing activities. One activity is designated as 'pretransfer' editing and involves the hydrolysis of activated Val-AMP. The other activity is designated 'posttransfer' editing and involves deacylation of mischarged Val-tRNA(Ile). This chain is Isoleucine--tRNA ligase, found in Pseudomonas fluorescens (strain SBW25).